We begin with the raw amino-acid sequence, 435 residues long: Histidine--tRNA ligase (435 aa).

Residues 415-435 (SVPLSAFPGDYDRPTFEDFAE) are disordered. A compositionally biased stretch (basic and acidic residues) spans 424–435 (DYDRPTFEDFAE).

It belongs to the class-II aminoacyl-tRNA synthetase family.

The protein resides in the cytoplasm. The catalysed reaction is tRNA(His) + L-histidine + ATP = L-histidyl-tRNA(His) + AMP + diphosphate + H(+). The chain is Histidine--tRNA ligase from Haloarcula marismortui (strain ATCC 43049 / DSM 3752 / JCM 8966 / VKM B-1809) (Halobacterium marismortui).